Here is a 435-residue protein sequence, read N- to C-terminus: Dual specificity mitogen-activated protein kinase kinase jkk-1 (435 aa).

Residues 35 to 49 (RDRRSTSVDQKHKEC) are compositionally biased toward basic and acidic residues. The segment at 35 to 90 (RDRRSTSVDQKHKECSSTSSSPQHQRPNNIGYLTSPMERKFTPLSMKPSPSRRDTE) is disordered. Residues 50-66 (SSTSSSPQHQRPNNIGY) show a composition bias toward polar residues. The region spanning 122–385 (IHIISLLGSG…YRQLMKHDFY (264 aa)) is the Protein kinase domain. ATP is bound by residues 128–136 (LGSGSCGVV) and lysine 149. Aspartate 246 acts as the Proton acceptor in catalysis.

It belongs to the protein kinase superfamily. STE Ser/Thr protein kinase family. MAP kinase kinase subfamily. As to quaternary structure, interacts with unc-16. Requires Mg(2+) as cofactor. Expressed in most neurons, including nerve ring, head ganglions, dorsal and ventral nerve cords and tail ganglions.

The protein localises to the cytoplasm. Its subcellular location is the perikaryon. It localises to the cell projection. It is found in the axon. It carries out the reaction L-seryl-[protein] + ATP = O-phospho-L-seryl-[protein] + ADP + H(+). The catalysed reaction is L-threonyl-[protein] + ATP = O-phospho-L-threonyl-[protein] + ADP + H(+). The enzyme catalyses L-tyrosyl-[protein] + ATP = O-phospho-L-tyrosyl-[protein] + ADP + H(+). In terms of biological role, dual specificity protein kinase which acts as an essential component of the JNK signal transduction pathway. May phosphorylate jnk-1. Plays a role in coordinating locomotion via D-type GABAergic motoneurons and in regulating synaptic vesicle transport downstream of adapter protein unc-16 and probably by activating jnk-1. Positively regulates lifespan. Upon environmental stress such as heat stress regulates daf-16 nuclear translocation probably by activating jnk-1. Regulates germline cell apoptosis in response to heavy metals such as Cu(2+) and to arsenite. This Caenorhabditis elegans protein is Dual specificity mitogen-activated protein kinase kinase jkk-1.